The primary structure comprises 33 residues: MSDIN-like toxin proprotein 1 (33 aa).

The propeptide occupies 1–10; that stretch reads MSDINATRLP. Positions 11–18 form a cross-link, cyclopeptide (Ile-Pro); the sequence is IIWAPVVP. Residues 19-33 constitute a propeptide that is removed on maturation; that stretch reads CISDDNDSTLTRGQR.

This sequence belongs to the MSDIN fungal toxin family. Post-translationally, processed by the macrocyclase-peptidase enzyme POPB to yield a toxic cyclic octapeptide. POPB first removes 10 residues from the N-terminus. Conformational trapping of the remaining peptide forces the enzyme to release this intermediate rather than proceed to macrocyclization. The enzyme rebinds the remaining peptide in a different conformation and catalyzes macrocyclization of the N-terminal 8 residues.

Probable toxin that belongs to the MSDIN-like toxin family responsible for a large number of food poisoning cases and deaths. In Amanita fuliginea (East Asian brown death cap), this protein is MSDIN-like toxin proprotein 1.